A 322-amino-acid polypeptide reads, in one-letter code: Secretion system apparatus protein SsaQ (322 aa).

Belongs to the FliN/MopA/SpaO family.

In terms of biological role, part of a type III secretion system. The polypeptide is Secretion system apparatus protein SsaQ (ssaQ) (Salmonella typhimurium (strain LT2 / SGSC1412 / ATCC 700720)).